A 528-amino-acid chain; its full sequence is Inorganic phosphate transporter 1-2 (528 aa).

Over 1–24 (MAGSQLNVLVKLDQAKTQWYHFMA) the chain is Cytoplasmic. Residues 25–45 (IVIAGMGFFTDAYDLFCIALV) traverse the membrane as a helical segment. Topologically, residues 46–71 (TKLLGRLYYTDITKPNPGTLPPNVSS) are extracellular. A helical transmembrane segment spans residues 72 to 92 (AVTGVALCGTLAGQLFFGWLG). Residues 93 to 99 (DKLGRKS) lie on the Cytoplasmic side of the membrane. Residues 100-120 (VYGFTLILMVVCSIASGLSFG) traverse the membrane as a helical segment. At 121–125 (HTPKS) the chain is on the extracellular side. Residues 126 to 146 (VIATLCFFRFWLGFGIGGDYP) traverse the membrane as a helical segment. At 147-163 (LSATIMSEYASKKTRGA) the chain is on the cytoplasmic side. Residues 164–184 (FIAAVFAMQGFGILFGAIVAL) form a helical membrane-spanning segment. The Extracellular portion of the chain corresponds to 185–212 (VVSAGFRHAYPAPSYAQNPAASLAPQAD). Residues 213 to 232 (YTWRLILMFGTIPAGLTYYW) form a helical membrane-spanning segment. Residues 233-296 (RMKMPETARY…RQFMKRHGMH (64 aa)) are Cytoplasmic-facing. The chain crosses the membrane as a helical span at residues 297–317 (LLATTSTWFLLDIAFYSQNLF). Over 318 to 348 (QKDIFSKVGWIPPAKTMNALEELYRISRAQA) the chain is Extracellular. The chain crosses the membrane as a helical span at residues 349-369 (LIALCGTIPGYWFTVAFIDIV). At 370-371 (GR) the chain is on the cytoplasmic side. The helical transmembrane segment at 372 to 392 (FWIQIMGFFMMTVFMLALGVP) threads the bilayer. The Extracellular segment spans residues 393–405 (YDHWTHPAHHTGF). The helical transmembrane segment at 406–426 (VVLYALTFFFANFGPNSTTFI) threads the bilayer. Residues 427–442 (VPAEIFPARLRSTCHG) lie on the Cytoplasmic side of the membrane. Residues 443–463 (ISAASGKAGAIIGAFGFLYAA) form a helical membrane-spanning segment. At 464–481 (QDQHNPDAGYSRGIGIRN) the chain is on the extracellular side. A helical transmembrane segment spans residues 482–502 (ALFVLAGTNFLGMLMTLLVPE). Over 503 to 528 (SKGLSLEEMSKDNVVDETAQEAIAQA) the chain is Cytoplasmic.

This sequence belongs to the major facilitator superfamily. Phosphate:H(+) symporter (TC 2.A.1.9) family. As to expression, expressed in the root stele and leaf phloem and xylem.

Its subcellular location is the membrane. Low-affinity transporter for inorganic phosphate (Pi). Involved in internal Pi transport from root to shoot. Responsible for most of the PHR2-mediated accumulation of excess shoot Pi under abundant Pi conditions, but not for PHO2-mediated accumulation of excess shoot Pi. Acts as a H(+):phosphate symporter. This Oryza sativa subsp. japonica (Rice) protein is Inorganic phosphate transporter 1-2 (PTH1-2).